We begin with the raw amino-acid sequence, 217 residues long: UPF0502 protein AHA_2872 (217 aa).

It belongs to the UPF0502 family.

The chain is UPF0502 protein AHA_2872 from Aeromonas hydrophila subsp. hydrophila (strain ATCC 7966 / DSM 30187 / BCRC 13018 / CCUG 14551 / JCM 1027 / KCTC 2358 / NCIMB 9240 / NCTC 8049).